Consider the following 166-residue polypeptide: Transcription antitermination protein NusB (166 aa).

Positions 1–18 are enriched in basic and acidic residues; the sequence is MISDESDRFNPRDPKPAD. Residues 1-28 are disordered; it reads MISDESDRFNPRDPKPADAGKPSKSAKR.

This sequence belongs to the NusB family.

Its function is as follows. Involved in transcription antitermination. Required for transcription of ribosomal RNA (rRNA) genes. Binds specifically to the boxA antiterminator sequence of the ribosomal RNA (rrn) operons. The protein is Transcription antitermination protein NusB of Pseudomonas putida (strain GB-1).